We begin with the raw amino-acid sequence, 271 residues long: Solute carrier family 66 member 2 (271 aa).

3 helical membrane passes run 7 to 27, 49 to 69, and 72 to 92; these read GWLLVPLHQLVSWVAAGAMVF, FSTHVCLVLLVANILRILFWF, and HFESPLLWQSIVMILTMLLML. Residues 14-80 form the PQ-loop 1 domain; the sequence is HQLVSWVAAG…RHFESPLLWQ (67 aa). Serine 110 bears the Phosphoserine mark. The next 3 helical transmembrane spans lie at 143 to 163, 168 to 188, and 232 to 252; these read FADYVQCVLAFTGVAGYITYL, ALFVETLGFLAVLTEAMLGVP, and VCGLLQVMVDLAILGQAYAFA. A PQ-loop 2 domain is found at 149-215; it reads CVLAFTGVAG…MVLMWTSGDT (67 aa).

It localises to the membrane. This Rattus norvegicus (Rat) protein is Solute carrier family 66 member 2 (Slc66a2).